Consider the following 304-residue polypeptide: Cytochrome c biogenesis protein CcsA (304 aa).

A run of 8 helical transmembrane segments spans residues 11-31, 37-57, 63-83, 96-116, 141-161, 212-232, 246-263, and 275-295; these read SLGF…FWAV, AGLV…QLIL, GHFP…ACTL, IVAA…SFAL, VIMV…AVLV, TITV…VWAN, TWAL…HTRL, and VAVV…LLGI.

Belongs to the CcmF/CycK/Ccl1/NrfE/CcsA family. May interact with ccs1.

It is found in the cellular thylakoid membrane. Required during biogenesis of c-type cytochromes (cytochrome c6 and cytochrome f) at the step of heme attachment. The protein is Cytochrome c biogenesis protein CcsA of Synechococcus sp. (strain CC9605).